The primary structure comprises 363 residues: Anhydro-N-acetylmuramic acid kinase (363 aa).

Residue 10 to 17 (GTSLDGMD) participates in ATP binding.

Belongs to the anhydro-N-acetylmuramic acid kinase family.

It carries out the reaction 1,6-anhydro-N-acetyl-beta-muramate + ATP + H2O = N-acetyl-D-muramate 6-phosphate + ADP + H(+). Its pathway is amino-sugar metabolism; 1,6-anhydro-N-acetylmuramate degradation. It functions in the pathway cell wall biogenesis; peptidoglycan recycling. In terms of biological role, catalyzes the specific phosphorylation of 1,6-anhydro-N-acetylmuramic acid (anhMurNAc) with the simultaneous cleavage of the 1,6-anhydro ring, generating MurNAc-6-P. Is required for the utilization of anhMurNAc either imported from the medium or derived from its own cell wall murein, and thus plays a role in cell wall recycling. Contributes to intrinsic fosfomycin resistance in P.aeruginosa. In Pseudomonas aeruginosa (strain ATCC 15692 / DSM 22644 / CIP 104116 / JCM 14847 / LMG 12228 / 1C / PRS 101 / PAO1), this protein is Anhydro-N-acetylmuramic acid kinase.